A 343-amino-acid polypeptide reads, in one-letter code: 3-isopropylmalate dehydrogenase (343 aa).

Arg94, Arg104, Arg128, and Asp218 together coordinate substrate. Residues Asp218, Asp242, and Asp246 each contribute to the Mg(2+) site. 278–290 (GSAPDIAGQNKAN) contacts NAD(+).

The protein belongs to the isocitrate and isopropylmalate dehydrogenases family. LeuB type 2 subfamily. In terms of assembly, homodimer. Mg(2+) is required as a cofactor. It depends on Mn(2+) as a cofactor.

It is found in the cytoplasm. The enzyme catalyses (2R,3S)-3-isopropylmalate + NAD(+) = 4-methyl-2-oxopentanoate + CO2 + NADH. Its pathway is amino-acid biosynthesis; L-leucine biosynthesis; L-leucine from 3-methyl-2-oxobutanoate: step 3/4. In terms of biological role, catalyzes the oxidation of 3-carboxy-2-hydroxy-4-methylpentanoate (3-isopropylmalate) to 3-carboxy-4-methyl-2-oxopentanoate. The product decarboxylates to 4-methyl-2 oxopentanoate. The sequence is that of 3-isopropylmalate dehydrogenase from Bifidobacterium longum subsp. infantis (strain ATCC 15697 / DSM 20088 / JCM 1222 / NCTC 11817 / S12).